Here is a 133-residue protein sequence, read N- to C-terminus: Major seminal plasma glycoprotein PSP-I (133 aa).

Positions 1 to 24 (MKLGSAIPWALLFSTATLISTGWG) are cleaved as a signal peptide. Cysteine 30 and cysteine 51 are joined by a disulfide. A CUB domain is found at 30–130 (CGGRLTDDYG…SPYEIIFLRD (101 aa)). A glycan (N-linked (GlcNAc...) (complex) asparagine) is linked at asparagine 71. Cysteines 74 and 95 form a disulfide.

Monomer or heterodimer with PSP-II (depending on the type of glycosylation of PSP-I). In terms of tissue distribution, seminal plasma or sperm.

Its subcellular location is the secreted. Functionally, not yet identified, major porcine seminal plasma protein. Can bind soybean trypsin inhibitor after deglycosylation. In Sus scrofa (Pig), this protein is Major seminal plasma glycoprotein PSP-I.